Reading from the N-terminus, the 247-residue chain is Flagellin B1 (247 aa).

The propeptide occupies 1 to 20 (MNKLLRKVRKAFSLKADNKA).

The protein belongs to the archaeal flagellin family. Glycosylated.

The protein resides in the archaeal flagellum. Its function is as follows. Flagellin is the subunit protein which polymerizes to form the filaments of archaeal flagella. This chain is Flagellin B1, found in Thermoplasma volcanium (strain ATCC 51530 / DSM 4299 / JCM 9571 / NBRC 15438 / GSS1).